A 2207-amino-acid chain; its full sequence is MWNNIELLTSDDTGSGCLSVGSRKENVTALYQADLLGKISSEKTSLSPKIQAFSLSHGFIIVADQSVILLDSICRSLQLFLIFDTDVDVVGLCQEGKFLFVGERSGNFHLIYVTSKQTLFTKAFVEKALDESQRTYRNLIIEKDGSNEGTYYMLLLTNNGFFYITNLQLSQIEQAIENTDLDSAKKLQGQFKCSFISTENYHSCLSLVASQSGTFASKTSVIIGGTGSCAFSKWEPDSTKKEMSLKNFVGTDIIKGAKSFQLIDNLLFVLDTDNVLSLWDAYTLTPVWNWPSLPVEQFVLTTEADSPSSVTWQGITNLKLVTLTATAKEKMRSLIIYSLPSMETLYSLEVSSVSSLVQTGISTDTIYLLEGIHKNDPNLCEDSVSDLVLRYLTEVLPENRLSRLLHKHRFAEAESFAIQFGLDVELVYKVKSNDMLEKLALISSDKSEQSKWQQLVDEAKENLCKIQDDDFVVNFCLKAQWVTYETTQEMLSYAKTRLMKKEDRALPASSDAFMEVLKAHAKLTTFYGAFGPEKFSGSSWIEFLNNEDDLRDVFLQLSEGNFACAQYLWLRHRADFESKFDVKMLENLLNSISTQFPLENLCSWFKNEVIPFVRRIVPEGQNILAKWLEQASRNLELTDKANWPENGLQLAEVFFTAEKTDRFGFASSWHWISLDYQNTEEVRQLRTLVSKLRELIILHRKYNCKLALSDFEKENATTVVFRMFDRVSAPELIPSVLEKSVRVYIREQNLQEEELLLLYIEDLLKRCSSKSMTLFDTAWEAKAMAVIRCLSDTDLIFDAVLKIMYKAVVPWSAAVEQLVKQHLEMDHPKVKLLQESYKLMEMKKLLRGYGIREVNLLNKEIMRVIRYILKQDIPSSLEDALKVAQGYRLSDDEIYSLRIIDLIDREQGGDCLLLLKSLPAAEAEKTAERVIIWARLALQEEPDGSEEDKAWRISVAKTSVDILKILCDIRKDNLQKKDESEEFLKRFQMVASLQENFEVFLPFEDYSNTALVAGLREQYIKAQEAAQAEHKHRGPPGPTPARGTHLSIKSKLHRQALALQVSEQELEAELTLRALKDGKVVAALSKCRDLLKHYCNADTGRLLFVVCQKLCQMLADDVPMVAPGGLSLPSEIHDLACHAVTICSPDYLLDVLELSKYTLTAVELCRQCQMDDCGMLMKAALGTHKDPYEEWSFSDFFSEDGIVLESQVVLPVIYELISSVMPPAESKRHPLDSISLPYCSTSEGENRILPLVSSISALLRSLQECSQWELALRFVVGSFGTCLQHSMSNVMSISLSKQLLGKNTLANSRHIIMELKEKSITFIRENATTLLHKVFNCRVVDLDLALAYCTLLPQKDVFDNLWKFIDKAWQNYDKILALSLVGSQLANLYQDIETGLWFHELSIDAKWGIRLGKLGISFQPAFRQNFLTKKDLIKALVNNIDMDTSLILEYCSTFQLDSDAALRLFIETLLRNTSSQSQGDAAPESTKHQHSKLLAKATELVPLLKNTKDLVISLSEILYKLDPYDYEMIDVVLKVLEQANEKITSVNINQALNLLRHLKSYRRISPPVDHEYQYALEHMITLPPAAHTRLPFHLILFGTAQNFWKILSSELSEESLPTLLLIAKLMKFSLDTLYVSTAKHLFEKNLKPKLLKSAQARSSTLMSKEVDKLMQTLESYLLSIVNPEWAVAIAISLTQEVPEGPFKMSSLKFCLYLAERWLQNIPPQDETCEKAKALQKKLCLQVRLSGTEAVLIAHKLNDQEYLRVIGKPAHLIVSLYEHPSISERLCTTSGKDYPDIHTAAKEIAEVNEVNLEKIWDMLLEKWLCPSTVPSEKASEFFELEEDEVLHRVVYLLQARPVDYCSRMLFVFATSATSTLGMRQLTFAHKARALQCLLYLADKETIESLFKKPIKEMKSYLKCITFLASFETLNIPITYELFCNSPKEGMIKGLWKNHSHEPMAVRLVAELCLEYKIYDLQLWNGLLQKLLGFNMIPYLRKVLSCISSIHSLWQVPYFSKAWQRVIQIPLLSASCPLRPSQLADCCDSLVAILECPVSDDLDMMGVAKQYVQLDLPAFALTCLTLMPHSEKRHQQIKNFLNSCDARIILQQIEEHMNTGQLAGFSHQIGSLVLNHVVNKKEFGILAKTKYFQLLKCHVINTGNVTELVNYLANDFSVDEASALINEYSKHCGKPVPADAAPCEILQTFLGGS.

Threonine 13 is subject to Phosphothreonine. Serine 15 carries the post-translational modification Phosphoserine. Residues 1024–1045 (EAAQAEHKHRGPPGPTPARGTH) are disordered.

In terms of assembly, interacts with ZW10. This interaction is required for stable association with the kinetochore. Component of the RZZ complex composed of KNTC1/ROD, ZW10 and ZWILCH.

The protein resides in the cytoplasm. The protein localises to the nucleus. It is found in the chromosome. Its subcellular location is the centromere. It localises to the kinetochore. The protein resides in the cytoskeleton. The protein localises to the spindle. In terms of biological role, essential component of the mitotic checkpoint, which prevents cells from prematurely exiting mitosis. Required for the assembly of the dynein-dynactin and MAD1-MAD2 complexes onto kinetochores. Its function related to the spindle assembly machinery is proposed to depend on its association in the mitotic RZZ complex. The sequence is that of Kinetochore-associated protein 1 (Kntc1) from Mus musculus (Mouse).